A 201-amino-acid polypeptide reads, in one-letter code: Recombination protein RecR (201 aa).

Residues 60–75 (CKYCQSLTEKDVCDIC) form a C4-type zinc finger. The Toprim domain maps to 83–177 (SKLCIIESML…KISRIGFGVP (95 aa)).

Belongs to the RecR family.

Functionally, may play a role in DNA repair. It seems to be involved in an RecBC-independent recombinational process of DNA repair. It may act with RecF and RecO. The protein is Recombination protein RecR of Francisella philomiragia subsp. philomiragia (strain ATCC 25017 / CCUG 19701 / FSC 153 / O#319-036).